The primary structure comprises 556 residues: MDEIQIASILKSSELFPIPQGVKLSYGTAGFRGDAKLLESTVYRVGILSALRSLKLGSATVGLMITASHNKVSDNGIKVSDPSGFMLSQEWEPFADQIANASSPEELVSLIRKFMEKEEIAIGENNKGAEVWLGRDTRPSGESLLRAGEIGVGSILGSVAIDIGILTTPQLHWMVRAKNKGLKATENDYFENLSTSFRCLIDLIPSSGNDKLEISKLLVDGANGVGGQKIEKLRGSLSNLDVEIRNTGRDGGVLNEGVGADFVQKEKVLPVGFGFKDVGMRCASLDGDADRLVYFYIPSDSSEKVELLDGDKILSLFALFIKEQLNALEDDEERKQSRLGVVQTAYANGASTDYLKHLGLDVVFAKTGVKHLHEKAAEFDIGIYFEANGHGTILFSESFLSWLVSKQKDLTAKGQGGSEEHKAVSRLMAVSNLINQAVGDALSGVLLVEVILQHLGWSIEKWNELYKDLPSRQIKVEVPDRTAVVTTSEETEALRPMGIQDAINSEIKKYSRGRAFIRPSGTEDVVRVYAEASTQEDADSLANSVAQLVKSFLGSS.

Residue Ser68 is the Phosphoserine intermediate of the active site. Residues Ser68, Asp286, Asp288, and Asp290 each contribute to the Mg(2+) site. Position 68 is a phosphoserine (Ser68). Residues 386-388 (EAN), 518-522 (RPSGT), and Arg527 each bind substrate.

The protein belongs to the phosphohexose mutase family. Mg(2+) serves as cofactor.

The catalysed reaction is N-acetyl-alpha-D-glucosamine 1-phosphate = N-acetyl-D-glucosamine 6-phosphate. It participates in nucleotide-sugar biosynthesis; UDP-N-acetyl-alpha-D-glucosamine biosynthesis; N-acetyl-alpha-D-glucosamine 1-phosphate from alpha-D-glucosamine 6-phosphate (route I): step 2/2. In terms of biological role, interconverts GlcNAc-6-P and GlcNAc-1-P. This chain is Phosphoacetylglucosamine mutase (DRT101), found in Arabidopsis thaliana (Mouse-ear cress).